Reading from the N-terminus, the 182-residue chain is MSRIGKKPIDIPSGVEVKIDGNVITVKGPKGSLTKEIHPEMIVKIENNQILVQRPSDERHHKALHGLTRTLIANMVAGVTKGYEKVLEIVGIGYRAQKQGKKLILNVGYSHPVEIEEPAGITIEVPDQNRIVVKGIDKQQVGNFAANIRKVREPDPYLGKGIKYADEVLRLKEGKAGKGGKK.

Belongs to the universal ribosomal protein uL6 family. Part of the 50S ribosomal subunit.

In terms of biological role, this protein binds to the 23S rRNA, and is important in its secondary structure. It is located near the subunit interface in the base of the L7/L12 stalk, and near the tRNA binding site of the peptidyltransferase center. This chain is Large ribosomal subunit protein uL6, found in Caldicellulosiruptor saccharolyticus (strain ATCC 43494 / DSM 8903 / Tp8T 6331).